We begin with the raw amino-acid sequence, 95 residues long: Small ribosomal subunit protein uS15 (95 aa).

It belongs to the universal ribosomal protein uS15 family. Part of the 30S ribosomal subunit. Forms a bridge to the 50S subunit in the 70S ribosome, contacting the 23S rRNA.

In terms of biological role, one of the primary rRNA binding proteins, it binds directly to 16S rRNA where it helps nucleate assembly of the platform of the 30S subunit by binding and bridging several RNA helices of the 16S rRNA. Functionally, forms an intersubunit bridge (bridge B4) with the 23S rRNA of the 50S subunit in the ribosome. This chain is Small ribosomal subunit protein uS15, found in Streptomyces coelicolor (strain ATCC BAA-471 / A3(2) / M145).